The chain runs to 265 residues: Pre-mRNA-splicing factor cwf15 (265 aa).

Disordered stretches follow at residues 1 to 31 (MTTA…ALPA) and 62 to 197 (AAHF…ALEQ). Over residues 113–125 (EADEDASDSDDSV) the composition is skewed to acidic residues. Residues 143 to 155 (SNSQESVDSSNSE) show a composition bias toward low complexity. Positions 155 to 205 (ESSDEESDSEDETQQLLRELENIKQERKREQMLQEEKNRALEQEKREREIA) form a coiled coil. The segment covering 156–167 (SSDEESDSEDET) has biased composition (acidic residues). The span at 172 to 197 (RELENIKQERKREQMLQEEKNRALEQ) shows a compositional bias: basic and acidic residues.

This sequence belongs to the CWC15 family. Belongs to the 40S cdc5-associated complex (or cwf complex), a spliceosome sub-complex reminiscent of a late-stage spliceosome composed of the U2, U5 and U6 snRNAs and at least brr2, cdc5, cwf2/prp3, cwf3/syf1, cwf4/syf3, cwf5/ecm2, spp42/cwf6, cwf7/spf27, cwf8, cwf9, cwf10, cwf11, cwf12, prp45/cwf13, cwf14, cwf15, cwf16, cwf17, cwf18, cwf19, cwf20, cwf21, cwf22, cwf23, cwf24, cwf25, cwf26, cyp7/cwf27, cwf28, cwf29/ist3, lea1, msl1, prp5/cwf1, prp10, prp12/sap130, prp17, prp22, sap61, sap62, sap114, sap145, slu7, smb1, smd1, smd3, smf1, smg1 and syf2.

It is found in the nucleus. Functionally, involved in pre-mRNA splicing. The chain is Pre-mRNA-splicing factor cwf15 (cwf15) from Schizosaccharomyces pombe (strain 972 / ATCC 24843) (Fission yeast).